Consider the following 573-residue polypeptide: Urease subunit alpha (573 aa).

One can recognise a Urease domain in the interval 136–573 (GAIDCHVHLI…LPMAQRYFLF (438 aa)). Ni(2+)-binding residues include H141, H143, and K224. The residue at position 224 (K224) is an N6-carboxylysine. H226 contributes to the substrate binding site. 2 residues coordinate Ni(2+): H253 and H279. H327 (proton donor) is an active-site residue. D367 provides a ligand contact to Ni(2+).

It belongs to the metallo-dependent hydrolases superfamily. Urease alpha subunit family. As to quaternary structure, heterotrimer of UreA (gamma), UreB (beta) and UreC (alpha) subunits. Three heterotrimers associate to form the active enzyme. It depends on Ni cation as a cofactor. Carboxylation allows a single lysine to coordinate two nickel ions.

It is found in the cytoplasm. The enzyme catalyses urea + 2 H2O + H(+) = hydrogencarbonate + 2 NH4(+). It functions in the pathway nitrogen metabolism; urea degradation; CO(2) and NH(3) from urea (urease route): step 1/1. This Mycolicibacterium vanbaalenii (strain DSM 7251 / JCM 13017 / BCRC 16820 / KCTC 9966 / NRRL B-24157 / PYR-1) (Mycobacterium vanbaalenii) protein is Urease subunit alpha.